Consider the following 384-residue polypeptide: S-adenosylmethionine synthase (384 aa).

His15 contributes to the ATP binding site. Residue Asp17 coordinates Mg(2+). Residue Glu43 participates in K(+) binding. Residues Glu56 and Gln99 each coordinate L-methionine. The tract at residues 99-109 is flexible loop; it reads QSADINQGVDR. Residues 164–166, 230–231, Asp239, 245–246, Ala262, and Lys266 contribute to the ATP site; these read DAK, RF, and RK. Asp239 serves as a coordination point for L-methionine. Lys270 lines the L-methionine pocket.

This sequence belongs to the AdoMet synthase family. Homotetramer; dimer of dimers. Requires Mg(2+) as cofactor. K(+) is required as a cofactor.

Its subcellular location is the cytoplasm. It carries out the reaction L-methionine + ATP + H2O = S-adenosyl-L-methionine + phosphate + diphosphate. It functions in the pathway amino-acid biosynthesis; S-adenosyl-L-methionine biosynthesis; S-adenosyl-L-methionine from L-methionine: step 1/1. Its function is as follows. Catalyzes the formation of S-adenosylmethionine (AdoMet) from methionine and ATP. The overall synthetic reaction is composed of two sequential steps, AdoMet formation and the subsequent tripolyphosphate hydrolysis which occurs prior to release of AdoMet from the enzyme. This Haemophilus influenzae (strain PittEE) protein is S-adenosylmethionine synthase.